The sequence spans 320 residues: Lipoyl synthase (320 aa).

Residues 9–31 (ANDARPRHPEKAHRPDQPIQRKP) are disordered. Residues 12–31 (ARPRHPEKAHRPDQPIQRKP) show a composition bias toward basic and acidic residues. [4Fe-4S] cluster contacts are provided by Cys60, Cys65, Cys71, Cys86, Cys90, Cys93, and Ser299. The region spanning 72–288 (WEKKHATFMI…ETTAYAKGFL (217 aa)) is the Radical SAM core domain.

It belongs to the radical SAM superfamily. Lipoyl synthase family. [4Fe-4S] cluster serves as cofactor.

It is found in the cytoplasm. It catalyses the reaction [[Fe-S] cluster scaffold protein carrying a second [4Fe-4S](2+) cluster] + N(6)-octanoyl-L-lysyl-[protein] + 2 oxidized [2Fe-2S]-[ferredoxin] + 2 S-adenosyl-L-methionine + 4 H(+) = [[Fe-S] cluster scaffold protein] + N(6)-[(R)-dihydrolipoyl]-L-lysyl-[protein] + 4 Fe(3+) + 2 hydrogen sulfide + 2 5'-deoxyadenosine + 2 L-methionine + 2 reduced [2Fe-2S]-[ferredoxin]. The protein operates within protein modification; protein lipoylation via endogenous pathway; protein N(6)-(lipoyl)lysine from octanoyl-[acyl-carrier-protein]: step 2/2. Functionally, catalyzes the radical-mediated insertion of two sulfur atoms into the C-6 and C-8 positions of the octanoyl moiety bound to the lipoyl domains of lipoate-dependent enzymes, thereby converting the octanoylated domains into lipoylated derivatives. This chain is Lipoyl synthase, found in Methylobacterium nodulans (strain LMG 21967 / CNCM I-2342 / ORS 2060).